Consider the following 165-residue polypeptide: Small ribosomal subunit protein uS3m (165 aa).

Residues 1–30 (MNFLKKLLPQVATEVQQLSRSGFHTSSVCC) constitute a mitochondrion transit peptide.

The protein belongs to the universal ribosomal protein uS3 family. As to quaternary structure, component of the mitochondrial ribosome small subunit (28S) which comprises a 12S rRNA and about 30 distinct proteins.

It is found in the mitochondrion. The sequence is that of Small ribosomal subunit protein uS3m (mRpS24) from Drosophila melanogaster (Fruit fly).